The sequence spans 357 residues: Serpentine receptor class epsilon-30 (357 aa).

7 helical membrane passes run 31 to 51, 61 to 81, 121 to 141, 165 to 185, 192 to 212, 253 to 273, and 283 to 303; these read IFELSSCILCGYILNLSIFVM, LMFLTVPLFAIWHELIIGKFI, LLIFGGFLQWHTIYSIVFGIL, IPIILTIISQLLSISISLAII, FLARLPFVICAPLSVLVFLFI, LVVVVIFYISICGFGIAALTF, and LIENFLFLHPYPICLTAMFSI.

The protein belongs to the nematode receptor-like protein sre family.

It localises to the membrane. This Caenorhabditis elegans protein is Serpentine receptor class epsilon-30 (sre-30).